The primary structure comprises 370 residues: MSKRDYYEVLGVDRNASADEVKKAYRKLARKYHPDVNKAPDAEDKFKEVKEAFDTLSDPQKKAHYDQFGHTDPNQGFGGGGAGDFGGFSDIFDMFFGGGGGRRNPNAPRQGADLQYTMTLEFKEAVFGKETTIEIPREETCHTCSGSGAKPGTKPESCPHCGGSGQLNIEQNTPFGRVVNRRVCHHCEGTGKYIKHKCATCGGKGKVRKRKKINVKVPAGIDHGQQIRLSGQGEAGVNGGPAGDLYIVFNVKPHEFFERDGDDIYCEMPLTFVQVALGDEIEVPTLNGKVKLKIPAGTQTGTSFRLRGKGVPNVHGRGQGDQHVQVRVITPKQLSEKEKELLREFAQMSGGRPDEQDDSFFAKVKRAFKG.

A J domain is found at 5–69 (DYYEVLGVDR…QKKAHYDQFG (65 aa)). A CR-type zinc finger spans residues 128–210 (GKETTIEIPR…CGGKGKVRKR (83 aa)). Residues Cys-141, Cys-144, Cys-158, Cys-161, Cys-184, Cys-187, Cys-198, and Cys-201 each contribute to the Zn(2+) site. CXXCXGXG motif repeat units follow at residues 141-148 (CHTCSGSG), 158-165 (CPHCGGSG), 184-191 (CHHCEGTG), and 198-205 (CATCGGKG).

It belongs to the DnaJ family. Homodimer. Requires Zn(2+) as cofactor.

The protein resides in the cytoplasm. Participates actively in the response to hyperosmotic and heat shock by preventing the aggregation of stress-denatured proteins and by disaggregating proteins, also in an autonomous, DnaK-independent fashion. Unfolded proteins bind initially to DnaJ; upon interaction with the DnaJ-bound protein, DnaK hydrolyzes its bound ATP, resulting in the formation of a stable complex. GrpE releases ADP from DnaK; ATP binding to DnaK triggers the release of the substrate protein, thus completing the reaction cycle. Several rounds of ATP-dependent interactions between DnaJ, DnaK and GrpE are required for fully efficient folding. Also involved, together with DnaK and GrpE, in the DNA replication of plasmids through activation of initiation proteins. This is Chaperone protein DnaJ from Halalkalibacterium halodurans (strain ATCC BAA-125 / DSM 18197 / FERM 7344 / JCM 9153 / C-125) (Bacillus halodurans).